The primary structure comprises 547 residues: Chaperonin GroEL (547 aa).

Residues Thr-30–Pro-33, Lys-51, Asp-87–Thr-91, Gly-415, Asn-479–Ala-481, and Asp-495 each bind ATP.

Belongs to the chaperonin (HSP60) family. As to quaternary structure, forms a cylinder of 14 subunits composed of two heptameric rings stacked back-to-back. Interacts with the co-chaperonin GroES.

The protein localises to the cytoplasm. It catalyses the reaction ATP + H2O + a folded polypeptide = ADP + phosphate + an unfolded polypeptide.. Together with its co-chaperonin GroES, plays an essential role in assisting protein folding. The GroEL-GroES system forms a nano-cage that allows encapsulation of the non-native substrate proteins and provides a physical environment optimized to promote and accelerate protein folding. The protein is Chaperonin GroEL of Bordetella bronchiseptica (strain ATCC BAA-588 / NCTC 13252 / RB50) (Alcaligenes bronchisepticus).